The chain runs to 194 residues: Imidazoleglycerol-phosphate dehydratase (194 aa).

It belongs to the imidazoleglycerol-phosphate dehydratase family.

The protein resides in the cytoplasm. The catalysed reaction is D-erythro-1-(imidazol-4-yl)glycerol 3-phosphate = 3-(imidazol-4-yl)-2-oxopropyl phosphate + H2O. It functions in the pathway amino-acid biosynthesis; L-histidine biosynthesis; L-histidine from 5-phospho-alpha-D-ribose 1-diphosphate: step 6/9. The polypeptide is Imidazoleglycerol-phosphate dehydratase (Halalkalibacterium halodurans (strain ATCC BAA-125 / DSM 18197 / FERM 7344 / JCM 9153 / C-125) (Bacillus halodurans)).